Here is a 531-residue protein sequence, read N- to C-terminus: 2,3-bisphosphoglycerate-independent phosphoglycerate mutase (531 aa).

Residues Asp-13 and Ser-63 each contribute to the Mn(2+) site. The Phosphoserine intermediate role is filled by Ser-63. Residues His-124, 154-155 (RD), Arg-187, Arg-193, 261-264 (RPDR), and Lys-342 each bind substrate. 5 residues coordinate Mn(2+): Asp-420, His-424, Asp-462, His-463, and His-480.

It belongs to the BPG-independent phosphoglycerate mutase family. As to quaternary structure, monomer. Mn(2+) is required as a cofactor.

The enzyme catalyses (2R)-2-phosphoglycerate = (2R)-3-phosphoglycerate. The protein operates within carbohydrate degradation; glycolysis; pyruvate from D-glyceraldehyde 3-phosphate: step 3/5. Catalyzes the interconversion of 2-phosphoglycerate and 3-phosphoglycerate. This is 2,3-bisphosphoglycerate-independent phosphoglycerate mutase from Mycoplasma capricolum subsp. capricolum (strain California kid / ATCC 27343 / NCTC 10154).